Reading from the N-terminus, the 160-residue chain is SsrA-binding protein (160 aa).

Positions 132–160 (KIHDKRDDMQKKDAQQEIARALKSSNRYE) are disordered. The span at 135–146 (DKRDDMQKKDAQ) shows a compositional bias: basic and acidic residues.

This sequence belongs to the SmpB family.

It localises to the cytoplasm. Functionally, required for rescue of stalled ribosomes mediated by trans-translation. Binds to transfer-messenger RNA (tmRNA), required for stable association of tmRNA with ribosomes. tmRNA and SmpB together mimic tRNA shape, replacing the anticodon stem-loop with SmpB. tmRNA is encoded by the ssrA gene; the 2 termini fold to resemble tRNA(Ala) and it encodes a 'tag peptide', a short internal open reading frame. During trans-translation Ala-aminoacylated tmRNA acts like a tRNA, entering the A-site of stalled ribosomes, displacing the stalled mRNA. The ribosome then switches to translate the ORF on the tmRNA; the nascent peptide is terminated with the 'tag peptide' encoded by the tmRNA and targeted for degradation. The ribosome is freed to recommence translation, which seems to be the essential function of trans-translation. The protein is SsrA-binding protein of Leptospira borgpetersenii serovar Hardjo-bovis (strain JB197).